The following is a 299-amino-acid chain: Acetylglutamate kinase (299 aa).

Substrate contacts are provided by residues 72–73 (GG), Arg94, and Asn196.

The protein belongs to the acetylglutamate kinase family. ArgB subfamily.

It is found in the cytoplasm. It carries out the reaction N-acetyl-L-glutamate + ATP = N-acetyl-L-glutamyl 5-phosphate + ADP. The protein operates within amino-acid biosynthesis; L-arginine biosynthesis; N(2)-acetyl-L-ornithine from L-glutamate: step 2/4. Its function is as follows. Catalyzes the ATP-dependent phosphorylation of N-acetyl-L-glutamate. The protein is Acetylglutamate kinase of Burkholderia thailandensis (strain ATCC 700388 / DSM 13276 / CCUG 48851 / CIP 106301 / E264).